Reading from the N-terminus, the 454-residue chain is Signal recognition particle protein (454 aa).

Residues 102-109 (GLQGTGKT), 184-188 (DTAGR), and 242-245 (TKMD) each bind GTP.

This sequence belongs to the GTP-binding SRP family. SRP54 subfamily. In terms of assembly, part of the signal recognition particle protein translocation system, which is composed of SRP and FtsY.

It is found in the cytoplasm. It catalyses the reaction GTP + H2O = GDP + phosphate + H(+). Functionally, involved in targeting and insertion of nascent membrane proteins into the cytoplasmic membrane. Binds to the hydrophobic signal sequence of the ribosome-nascent chain (RNC) as it emerges from the ribosomes. The SRP-RNC complex is then targeted to the cytoplasmic membrane where it interacts with the SRP receptor FtsY. The polypeptide is Signal recognition particle protein (Aquifex aeolicus (strain VF5)).